Consider the following 683-residue polypeptide: Rhophilin-2-A (683 aa).

An REM-1 domain is found at 25 to 99 (KSIAQTGRSK…LERLNISVEV (75 aa)). The BRO1 domain occupies 110 to 501 (PLIPLGLKET…TDIFQRLGPL (392 aa)). Residues 515-592 (KICITKEDGD…QSIEIQVISI (78 aa)) form the PDZ domain.

Belongs to the RHPN family. Interacts with RhoA.

It localises to the cytoplasm. It is found in the perinuclear region. Binds specifically to GTP-Rho. The chain is Rhophilin-2-A (rhpn2-a) from Xenopus laevis (African clawed frog).